The chain runs to 520 residues: Pleckstrin homology domain-containing family A member 8 (520 aa).

Residues 1-93 (MEGVLYKWTN…WLVALGSAKA (93 aa)) enclose the PH domain. Thr-139 is subject to Phosphothreonine. Ser-145 bears the Phosphoserine mark. Thr-153 is subject to Phosphothreonine. Residues 275–285 (GEESLGNHDSD) show a composition bias toward basic and acidic residues. The tract at residues 275–305 (GEESLGNHDSDLAQPELHSTSSSPESHWEED) is disordered. The glycolipid transfer protein homology domain stretch occupies residues 311 to 520 (TFFSTMNTSF…VHGLESDEVV (210 aa)).

Homodimer. Interacts with ARF1; the interaction together with phosphatidylinositol 4-phosphate binding is required for FAPP2 GlcCer transfer ability.

It localises to the cytoplasm. The protein localises to the golgi apparatus. The protein resides in the trans-Golgi network membrane. Its subcellular location is the membrane. Functionally, cargo transport protein that is required for apical transport from the trans-Golgi network (TGN). Transports AQP2 from the trans-Golgi network (TGN) to sites of AQP2 phosphorylation. Mediates the non-vesicular transport of glucosylceramide (GlcCer) from the trans-Golgi network (TGN) to the plasma membrane and plays a pivotal role in the synthesis of complex glycosphingolipids. Binding of both phosphatidylinositol 4-phosphate (PIP) and ARF1 are essential for the GlcCer transfer ability. Also required for primary cilium formation, possibly by being involved in the transport of raft lipids to the apical membrane, and for membrane tubulation. The sequence is that of Pleckstrin homology domain-containing family A member 8 (PLEKHA8) from Bos taurus (Bovine).